A 461-amino-acid polypeptide reads, in one-letter code: uncharacterized protein (461 aa).

A compositionally biased stretch (basic and acidic residues) spans 1–19 (MEKCSHESGRHSAENDGKY). The interval 1-21 (MEKCSHESGRHSAENDGKYDI) is disordered.

The protein belongs to the CapA family.

Its function is as follows. Could be involved in the biosynthesis of a cell wall component. This is an uncharacterized protein from Sinorhizobium fredii (strain NBRC 101917 / NGR234).